The chain runs to 1044 residues: MMAAEAGGEEGGPVTAGAAGGGAAAASGAYPAVCRVKIPAALPVAAAAPFPGLAEAGVAATLGGGAALGSGFLGAGSVAGTPGGVGLSAGGAAAGVAGVAAAAAGAGGEMAFAKGTTSLPTETFGAGGGFPPLPPPPPQLPTLGAGLGTVDEGDSLDGPEYEEEEVAIPLTAPPTNQWYHGKLDRTIAEERLRQAGKSGSYLIRESDRRPGSFVLSFLSQTNVVNHFRIIAMCGDYYIGGRRFSSLSDLIGYYSHVSCLLKGEKLLYPVAPPEPVEDRRRVRAILPYTKVPDTDEISFLKGDMFIVHNELEDGWMWVTNLRTDEQGLIVEDLVEEVGREEDPHEGKIWFHGKISKQEAYNLLMTVGQACSFLVRPSDNTPGDYSLYFRTSENIQRFKICPTPNNQFMMGGRYYNSIGDIIDHYRKEQIVEGYYLKEPVPMQDQEQVLNDAVDGKEIYNTIRRKTKDAFYKNIVKKGYLLKKGKGKRWKNLYFILEGSDAQLIYFESEKRATKPKGLIDLSVCSVYVVHDSLFGRPNCFQIVVQHFSEEHYIFYFAGETPEQAEDWMKGLQAFCNLRKSSPGTSNKRLRQVSSLILHIEEAHKLPVKHFTNPYCNIYLNSVQVAKTHAREGQNPVWSEEFVFDDLPPDINRFEITLSNKTKKSKDPDILFMRCQLSRLQKGHATDEWFLLSSHIPLKGIEPGSLRVRARYSMEKIMPEEEYSEFKELILQKELHVVYALSHVCGQDRTLLASILLKIFLHEKLESLLLCTLNDREISMEDEATTLFRATTLASTLMEQSMKATATQFVHHALKDSILRIMESKQSCELSPSKLEKNEDVNTNLAHLLNILSELVEKIFMASEILPPTLRYIYGCLQKSVQHKWPTNTTMRTRVVSGFVFLRLICPAILNPRMFNIISDSPSPIAARTLTLVAKSVQNLANLVEFGAKEPYMEGVNPFIKSNKHRMIMFLDELGNVPELPDTTEHSRTDLCRDLAALHEICVAHSDELRTLSNERGAQQHVLKKLLAITELLQQKQNQYTKTNDVR.

Residue Met1 is modified to N-acetylmethionine. Positions Met1–Glu160 are hydrophobic. Residues Trp178 to Val269 enclose the SH2 1 domain. One can recognise an SH3 domain in the interval Glu276 to Arg338. The region spanning Trp348–Val438 is the SH2 2 domain. The PH domain occupies Asn471–Asn574. Positions Asn574–Phe687 constitute a C2 domain. Phosphotyrosine is present on Tyr612. 2 consecutive repeats follow at residues Pro646–Asp664 and Pro665–Thr683. The region spanning Lys761–Leu971 is the Ras-GAP domain. Ser828 bears the Phosphoserine mark.

Interacts with SQSTM1. Interacts with SPSB1; the interaction does not promote degradation. Interacts with CAV2 (tyrosine phosphorylated form). Directly interacts with NCK1. Interacts with PDGFRB (tyrosine phosphorylated). Interacts (via SH2 domain) with the 'Tyr-9' phosphorylated form of PDPK1. Interacts with tyrosine-phosphorylated EPHB4. Post-translationally, phosphorylated by SRC and LCK. The phosphorylation SRC inhibits its ability to stimulate the Ras-GTPase activity, whereas phosphorylation by LCK does not display any effect on stimulation activity.

Its subcellular location is the cytoplasm. Functionally, inhibitory regulator of the Ras-cyclic AMP pathway. Stimulates the GTPase of normal but not oncogenic Ras p21. The protein is Ras GTPase-activating protein 1 (RASA1) of Bos taurus (Bovine).